The chain runs to 636 residues: Probable potassium transport system protein Kup (636 aa).

12 helical membrane passes run Val-22–Tyr-42, Ile-64–Ile-84, Leu-115–Pro-135, Phe-150–Leu-170, Leu-182–Ile-202, Phe-220–Thr-240, Trp-261–Leu-281, Leu-293–Ile-313, Ile-351–Phe-371, Val-383–Leu-403, Pro-408–Ala-428, and Ile-433–Thr-453.

This sequence belongs to the HAK/KUP transporter (TC 2.A.72) family.

It localises to the cell inner membrane. It carries out the reaction K(+)(in) + H(+)(in) = K(+)(out) + H(+)(out). In terms of biological role, transport of potassium into the cell. Likely operates as a K(+):H(+) symporter. The protein is Probable potassium transport system protein Kup of Pseudomonas putida (strain ATCC 700007 / DSM 6899 / JCM 31910 / BCRC 17059 / LMG 24140 / F1).